Reading from the N-terminus, the 687-residue chain is Immune inhibitor A (687 aa).

A compositionally biased stretch (basic and acidic residues) spans 1–12; it reads MKDAKADTKEKL. Residues 1–25 constitute a signal peptide (or 32); the sequence is MKDAKADTKEKLNQPATGTPAATGP. The tract at residues 1–43 is disordered; the sequence is MKDAKADTKEKLNQPATGTPAATGPVKGGLNGKVPTSPAKQKA. A propeptide spanning residues 26–40 is cleaved from the precursor; that stretch reads VKGGLNGKVPTSPAK. Histidine 266 is a binding site for Zn(2+). Glutamate 267 is a catalytic residue. Residue histidine 270 coordinates Zn(2+).

This sequence belongs to the peptidase M6 family. Requires Zn(2+) as cofactor. It depends on Ca(2+) as a cofactor.

Its subcellular location is the secreted. In terms of biological role, neutral metalloprotease that is secreted to degrade antibacterial proteins produced by the insect host for its defense (attacins and cecropins). Probably degrades some unknown crucial protein(s) too, since it is toxic when injected to insect larvae. The protein is Immune inhibitor A (ina) of Bacillus thuringiensis subsp. alesti.